The chain runs to 279 residues: PHO85 cyclin-1 (279 aa).

The region spanning 19–152 (DIIKFLTDTT…LLQLLNWDLR (134 aa)) is the Cyclin N-terminal domain. The required for degradation by DMA1 stretch occupies residues 29-36 (LRVVPSSN). T39 is subject to Phosphothreonine; by PHO85. S43 is modified (phosphoserine; by PHO85). Residues K82 and K121 each participate in a glycyl lysine isopeptide (Lys-Gly) (interchain with G-Cter in ubiquitin) cross-link.

It belongs to the cyclin family. PCL1,2 subfamily. As to quaternary structure, forms a cyclin-CDK complex with PHO85. Interacts with HMS1, NCP1 and NPA3. Interacts with DMA1. In terms of processing, phosphorylated by PHO85; necessary for interaction with DMA1 and subsequent degradation. Ubiquitinated by E3 ubiquitin ligase DMA1 in response to nutrient condition; this targets PCL1 for destruction.

It is found in the cytoplasm. The protein localises to the nucleus. In terms of biological role, G1/S-specific cyclin partner of the cyclin-dependent kinase (CDK) PHO85. Essential for the control of the cell cycle at the G1/S (start) transition. The PCL1-PHO85 cyclin-CDK holoenzyme is involved in phosphorylation of the CDK inhibitor (CKI) SIC1, which is required for its ubiquitination and degradation, releasing repression of b-type cyclins and promoting exit from mitosis. Together with cyclin PCL2, positively controls degradation of sphingoid long chain base kinase LCB4. PCL1-PHO85 phosphorylates LCB4, which is required for its ubiquitination and degradation. PCL1-PHO85 also phosphorylates HMS1, NCP1 and NPA3, which may all have a role in mitotic exit. This Saccharomyces cerevisiae (strain ATCC 204508 / S288c) (Baker's yeast) protein is PHO85 cyclin-1.